A 270-amino-acid polypeptide reads, in one-letter code: S-adenosylmethionine decarboxylase proenzyme (270 aa).

Ser117 acts as the Schiff-base intermediate with substrate; via pyruvic acid in catalysis. Ser117 carries the pyruvic acid (Ser); by autocatalysis modification. The active-site Proton acceptor; for processing activity is His122. Residue Cys145 is the Proton donor; for catalytic activity of the active site.

It belongs to the prokaryotic AdoMetDC family. Type 2 subfamily. As to quaternary structure, heterooctamer of four alpha and four beta chains arranged as a tetramer of alpha/beta heterodimers. Pyruvate serves as cofactor. In terms of processing, is synthesized initially as an inactive proenzyme. Formation of the active enzyme involves a self-maturation process in which the active site pyruvoyl group is generated from an internal serine residue via an autocatalytic post-translational modification. Two non-identical subunits are generated from the proenzyme in this reaction, and the pyruvate is formed at the N-terminus of the alpha chain, which is derived from the carboxyl end of the proenzyme. The post-translation cleavage follows an unusual pathway, termed non-hydrolytic serinolysis, in which the side chain hydroxyl group of the serine supplies its oxygen atom to form the C-terminus of the beta chain, while the remainder of the serine residue undergoes an oxidative deamination to produce ammonia and the pyruvoyl group blocking the N-terminus of the alpha chain.

The enzyme catalyses S-adenosyl-L-methionine + H(+) = S-adenosyl 3-(methylsulfanyl)propylamine + CO2. Its pathway is amine and polyamine biosynthesis; S-adenosylmethioninamine biosynthesis; S-adenosylmethioninamine from S-adenosyl-L-methionine: step 1/1. Its function is as follows. Catalyzes the decarboxylation of S-adenosylmethionine to S-adenosylmethioninamine (dcAdoMet), the propylamine donor required for the synthesis of the polyamines spermine and spermidine from the diamine putrescine. The protein is S-adenosylmethionine decarboxylase proenzyme of Pseudoalteromonas translucida (strain TAC 125).